We begin with the raw amino-acid sequence, 385 residues long: MKSLLALVAGNLVTAVSGHGYLTVPASRTRLGFEAGIDTCPECSILEPVSAWPDLTAAQVGRSGPCGYNARVSVDYNQPGDYWGNEPVVSYTAGDVVEVQWCVDHNGDHGGMFTYGICQNQTLVDLFLTPGYLPTNEEKQAAEDCFLEGELSCLHVPGQTCNYNPDCSAGEPCYQNDWFTCNAFQADNNRACQGVDGAALNSCMTTIAGGYTVTKKIKIPDYSSSHTLLRFRWNSFQTAQVYLHCADIAIVGGSGSSPSPTSTTSTATSTTTPSSTSCASAISIPVTFNALVTTTYGENVYLAGSISQLGSWSTSSAVALSASKYSSSSPLWTVTVDLPVGATFEYKYIKKESDGSIVWESGPNRSYTVPTGCSGTTATESGAWR.

Positions 1–18 (MKSLLALVAGNLVTAVSG) are cleaved as a signal peptide. His-19 serves as a coordination point for Cu(2+). His-19 is subject to Methylhistidine. Positions 19-248 (HGYLTVPASR…AQVYLHCADI (230 aa)) are N-terminal catalytic module. 7 disulfides stabilise this stretch: Cys-40-Cys-43, Cys-66-Cys-245, Cys-102-Cys-203, Cys-118-Cys-145, Cys-153-Cys-161, Cys-167-Cys-173, and Cys-181-Cys-192. Residue His-109 participates in Cu(2+) binding. An N-linked (GlcNAc...) asparagine glycan is attached at Asn-120. Cu(2+) is bound at residue Tyr-242. Positions 254–276 (SGSSPSPTSTTSTATSTTTPSST) are disordered. The span at 256 to 276 (SSPSPTSTTSTATSTTTPSST) shows a compositional bias: low complexity. The 108-residue stretch at 278 to 385 (CASAISIPVT…TTATESGAWR (108 aa)) folds into the CBM20 domain. The N-linked (GlcNAc...) asparagine glycan is linked to Asn-364.

The protein belongs to the polysaccharide monooxygenase AA13 family. Cu(2+) is required as a cofactor. Post-translationally, the catalytically essential N-terminal histidine His-19 is post-translationally modified by methylation to prevent protonation of the histidine side chain, and protect the critical active site of the enzyme from oxidative damage.

It localises to the secreted. It carries out the reaction starch + reduced acceptor + O2 = D-glucono-1,5-lactone-terminated malto-oligosaccharides + short-chain malto-oligosaccharides + acceptor + H2O.. In terms of biological role, starch-active polysaccharide monooxygenase that oxidizes the C1 position of starch substrates, but not in cellulose, chitin, polygalacturonan or esterified pectin, nor with Arabidopsis stem cell walls. Catalysis by LPMOs requires the reduction of the active-site copper from Cu(II) to Cu(I) by a reducing agent and H(2)O(2) or O(2) as a cosubstrate. The polypeptide is AA13 family lytic polysaccharide monooxygenase aasA (Emericella nidulans (strain FGSC A4 / ATCC 38163 / CBS 112.46 / NRRL 194 / M139) (Aspergillus nidulans)).